A 270-amino-acid chain; its full sequence is Diaminopimelate epimerase (270 aa).

3 residues coordinate substrate: N15, Q49, and N66. C75 acts as the Proton donor in catalysis. Substrate is bound by residues 76-77 (GN), N155, N187, and 204-205 (ER). The active-site Proton acceptor is the C213. 214 to 215 (GS) provides a ligand contact to substrate.

This sequence belongs to the diaminopimelate epimerase family. In terms of assembly, homodimer.

Its subcellular location is the cytoplasm. The enzyme catalyses (2S,6S)-2,6-diaminopimelate = meso-2,6-diaminopimelate. Its pathway is amino-acid biosynthesis; L-lysine biosynthesis via DAP pathway; DL-2,6-diaminopimelate from LL-2,6-diaminopimelate: step 1/1. In terms of biological role, catalyzes the stereoinversion of LL-2,6-diaminopimelate (L,L-DAP) to meso-diaminopimelate (meso-DAP), a precursor of L-lysine and an essential component of the bacterial peptidoglycan. This Rickettsia africae (strain ESF-5) protein is Diaminopimelate epimerase.